The chain runs to 383 residues: Erythronate-4-phosphate dehydrogenase (383 aa).

Residues Ser-45 and Thr-66 each contribute to the substrate site. Asp-146 and Thr-175 together coordinate NAD(+). Arg-208 is an active-site residue. Asp-232 provides a ligand contact to NAD(+). The active site involves Glu-237. The active-site Proton donor is His-254. Gly-257 contributes to the NAD(+) binding site.

The protein belongs to the D-isomer specific 2-hydroxyacid dehydrogenase family. PdxB subfamily. Homodimer.

The protein resides in the cytoplasm. It carries out the reaction 4-phospho-D-erythronate + NAD(+) = (R)-3-hydroxy-2-oxo-4-phosphooxybutanoate + NADH + H(+). It participates in cofactor biosynthesis; pyridoxine 5'-phosphate biosynthesis; pyridoxine 5'-phosphate from D-erythrose 4-phosphate: step 2/5. Functionally, catalyzes the oxidation of erythronate-4-phosphate to 3-hydroxy-2-oxo-4-phosphonooxybutanoate. The polypeptide is Erythronate-4-phosphate dehydrogenase (Chromohalobacter salexigens (strain ATCC BAA-138 / DSM 3043 / CIP 106854 / NCIMB 13768 / 1H11)).